The primary structure comprises 522 residues: E3 ubiquitin-protein ligase DMA2 (522 aa).

Disordered stretches follow at residues 1 to 56 (MYTP…RPAS) and 69 to 92 (QNSQ…PSNS). A compositionally biased stretch (low complexity) spans 14–35 (APTSSMTSNSSSASNANTTSSS). Over residues 36 to 49 (GINPRNRASGTPSN) the composition is skewed to polar residues. At Ser-206 the chain carries Phosphoserine. Residues Lys-211, Lys-256, Lys-258, Lys-288, Lys-310, Lys-333, Lys-343, Lys-346, Lys-366, Lys-406, Lys-412, and Lys-423 each participate in a glycyl lysine isopeptide (Lys-Gly) (interchain with G-Cter in ubiquitin) cross-link. Residues 295–358 (LVIGRYTERV…SGTFLNHQRL (64 aa)) form the FHA domain. The RING-type zinc-finger motif lies at 433-477 (CSICLCKIKPCQAIFISPCAHSWHFRCVRRLVMLSYPQFVCPNCR).

The protein belongs to the DMA1 family. UBC4-dependent autoubiquitination occurs at Lys-211, Lys-258, Lys-288, Lys-310, Lys-333, Lys-343, Lys-346, Lys-366, Lys-406, Lys-412 and Lys-423. UBC4-dependent autoubiquitination is responsible for DMA2 turnover. UBC13/MMS2-dependent autoubiquitination occurs at Lys-258, Lys-310, Lys-346 and Lys-366. Lys-211, Lys-256, Lys-288, Lys-310, Lys-343, Lys-258, Lys-366 and Lys-412 are also ubiquitinated in trans by DMA1 E3 ligase in association with UBC4.

It is found in the cytoplasm. It catalyses the reaction S-ubiquitinyl-[E2 ubiquitin-conjugating enzyme]-L-cysteine + [acceptor protein]-L-lysine = [E2 ubiquitin-conjugating enzyme]-L-cysteine + N(6)-ubiquitinyl-[acceptor protein]-L-lysine.. Functionally, E3 ubiquitin-protein ligase which functions in cell cycle retarding in conjunction with the UBC4 and UBC13/MMS2 complex, 2 E2 ubiquitin conjugating enzymes. Involved in nutritional control of the cell cycle. Required for proper spindle positioning, likely regulating septin ring deposition at the bud neck. The polypeptide is E3 ubiquitin-protein ligase DMA2 (DMA2) (Saccharomyces cerevisiae (strain ATCC 204508 / S288c) (Baker's yeast)).